We begin with the raw amino-acid sequence, 150 residues long: uncharacterized protein (150 aa).

This is an uncharacterized protein from Rickettsia prowazekii (strain Madrid E).